A 71-amino-acid polypeptide reads, in one-letter code: Cell division protein ZapB (71 aa).

Residues 5–67 (LEVLEQLESK…RALLGKMDQM (63 aa)) adopt a coiled-coil conformation.

Belongs to the ZapB family. As to quaternary structure, homodimer. The ends of the coiled-coil dimer bind to each other, forming polymers. Interacts with FtsZ.

It localises to the cytoplasm. Non-essential, abundant cell division factor that is required for proper Z-ring formation. It is recruited early to the divisome by direct interaction with FtsZ, stimulating Z-ring assembly and thereby promoting cell division earlier in the cell cycle. Its recruitment to the Z-ring requires functional FtsA or ZipA. This chain is Cell division protein ZapB, found in Aeromonas hydrophila subsp. hydrophila (strain ATCC 7966 / DSM 30187 / BCRC 13018 / CCUG 14551 / JCM 1027 / KCTC 2358 / NCIMB 9240 / NCTC 8049).